The following is an 89-amino-acid chain: Small ribosomal subunit protein uS19 (89 aa).

The protein belongs to the universal ribosomal protein uS19 family.

Functionally, protein S19 forms a complex with S13 that binds strongly to the 16S ribosomal RNA. In Azobacteroides pseudotrichonymphae genomovar. CFP2, this protein is Small ribosomal subunit protein uS19.